A 268-amino-acid polypeptide reads, in one-letter code: Leucyl/phenylalanyl-tRNA--protein transferase (268 aa).

This sequence belongs to the L/F-transferase family.

It localises to the cytoplasm. The catalysed reaction is N-terminal L-lysyl-[protein] + L-leucyl-tRNA(Leu) = N-terminal L-leucyl-L-lysyl-[protein] + tRNA(Leu) + H(+). The enzyme catalyses N-terminal L-arginyl-[protein] + L-leucyl-tRNA(Leu) = N-terminal L-leucyl-L-arginyl-[protein] + tRNA(Leu) + H(+). It catalyses the reaction L-phenylalanyl-tRNA(Phe) + an N-terminal L-alpha-aminoacyl-[protein] = an N-terminal L-phenylalanyl-L-alpha-aminoacyl-[protein] + tRNA(Phe). Its function is as follows. Functions in the N-end rule pathway of protein degradation where it conjugates Leu, Phe and, less efficiently, Met from aminoacyl-tRNAs to the N-termini of proteins containing an N-terminal arginine or lysine. The chain is Leucyl/phenylalanyl-tRNA--protein transferase from Psychrobacter arcticus (strain DSM 17307 / VKM B-2377 / 273-4).